A 309-amino-acid chain; its full sequence is Acetyl-coenzyme A carboxylase carboxyl transferase subunit beta (309 aa).

Residues N29–S298 enclose the CoA carboxyltransferase N-terminal domain. Residues C35, C36, C52, and C55 each contribute to the Zn(2+) site.

The protein belongs to the AccD/PCCB family. In terms of assembly, acetyl-CoA carboxylase is a heterohexamer composed of biotin carboxyl carrier protein (AccB), biotin carboxylase (AccC) and two subunits each of ACCase subunit alpha (AccA) and ACCase subunit beta (AccD). It depends on Zn(2+) as a cofactor.

It localises to the cytoplasm. The catalysed reaction is N(6)-carboxybiotinyl-L-lysyl-[protein] + acetyl-CoA = N(6)-biotinyl-L-lysyl-[protein] + malonyl-CoA. It functions in the pathway lipid metabolism; malonyl-CoA biosynthesis; malonyl-CoA from acetyl-CoA: step 1/1. Component of the acetyl coenzyme A carboxylase (ACC) complex. Biotin carboxylase (BC) catalyzes the carboxylation of biotin on its carrier protein (BCCP) and then the CO(2) group is transferred by the transcarboxylase to acetyl-CoA to form malonyl-CoA. This is Acetyl-coenzyme A carboxylase carboxyl transferase subunit beta from Pelagibacter ubique (strain HTCC1062).